The chain runs to 308 residues: Ribosomal RNA small subunit methyltransferase H (308 aa).

Residues 32-34 (AGH), Asp-52, Phe-79, Asp-100, and Gln-107 each bind S-adenosyl-L-methionine.

This sequence belongs to the methyltransferase superfamily. RsmH family.

The protein localises to the cytoplasm. The enzyme catalyses cytidine(1402) in 16S rRNA + S-adenosyl-L-methionine = N(4)-methylcytidine(1402) in 16S rRNA + S-adenosyl-L-homocysteine + H(+). Its function is as follows. Specifically methylates the N4 position of cytidine in position 1402 (C1402) of 16S rRNA. This Mycoplasma mycoides subsp. mycoides SC (strain CCUG 32753 / NCTC 10114 / PG1) protein is Ribosomal RNA small subunit methyltransferase H.